Reading from the N-terminus, the 141-residue chain is MAKKVVAVIKLALDAGKANPAPPVGPALGQHGVNIMMFCKEYNARTQDKAGYVIPVEISVFEDRSFTFITKTPPASVLITKAAKIQKGSGESAKGSVGSISRAQLEEIAKTKLPDLNCTSIESAMRIIEGTARNMGVSISD.

The protein belongs to the universal ribosomal protein uL11 family. Part of the ribosomal stalk of the 50S ribosomal subunit. Interacts with L10 and the large rRNA to form the base of the stalk. L10 forms an elongated spine to which L12 dimers bind in a sequential fashion forming a multimeric L10(L12)X complex. One or more lysine residues are methylated.

Forms part of the ribosomal stalk which helps the ribosome interact with GTP-bound translation factors. The sequence is that of Large ribosomal subunit protein uL11 from Synechococcus sp. (strain CC9605).